The following is a 488-amino-acid chain: Probable cytosol aminopeptidase (488 aa).

Residues lysine 251 and aspartate 256 each coordinate Mn(2+). The active site involves lysine 263. Mn(2+) is bound by residues aspartate 274, aspartate 333, and glutamate 335. Arginine 337 is an active-site residue.

It belongs to the peptidase M17 family. The cofactor is Mn(2+).

It localises to the cytoplasm. The enzyme catalyses Release of an N-terminal amino acid, Xaa-|-Yaa-, in which Xaa is preferably Leu, but may be other amino acids including Pro although not Arg or Lys, and Yaa may be Pro. Amino acid amides and methyl esters are also readily hydrolyzed, but rates on arylamides are exceedingly low.. It catalyses the reaction Release of an N-terminal amino acid, preferentially leucine, but not glutamic or aspartic acids.. Functionally, presumably involved in the processing and regular turnover of intracellular proteins. Catalyzes the removal of unsubstituted N-terminal amino acids from various peptides. The polypeptide is Probable cytosol aminopeptidase (Cenarchaeum symbiosum (strain A)).